Reading from the N-terminus, the 630-residue chain is MVDQESLVSFSSETSQSINSDIDIESQQQPRQYIPSNEKDGNKERLHLTRTETVKSLQEMGMTQDAPIPDVNAPQTTTKNAIFPEEYTMETPTGLVPVATLQSLGRTSTAISKSRTRQIERSVSRRSQNIAASSNSSNKEELEDEEEVSSDMSNQQPELDPEIEFVTFVTGDPTNPHNWPLWIRWAYTVILSCLVICVAYGSACITGGLFTVQEQYHVGLEAAILSCSLMVIGFSLGPLIWSPVSDLYGRRLAYFISMGLYTIFNIPCALSPNLGGLLVCRFLCGVFSSSGLCLVGGSIADMFPSETRGRAIAFFAFAPYTGPIIGPLVNGFVSVCTRRMDLIFWINMAFAGVMWIIVAFIPETYAPVILKWRAAKLRKETGNPKIMTEQEAQGVSVNEMMKACLIRPLYFAVTEPVLDLTCFYVCLIYSLLYAFFFAFPVVFGELYGYKDNLIGLMFIPILIGATMALATTFYCENEYLKLVKKRKPTPEDRLFGAMIGAPFAAAALWILGATSYKHIIWVGPASSGLAFGYGMVLIYYSLNNYIIDCYVQYASSALATKVFLRSAGGAAFPLFTNQMYHKLGLQWASWLLAFISTAMILLPFGFYYYGKTLRHKLSKKDYSIDTIEGY.

Over residues 1–35 (MVDQESLVSFSSETSQSINSDIDIESQQQPRQYIP) the composition is skewed to polar residues. Disordered stretches follow at residues 1–46 (MVDQ…KERL) and 107–157 (TSTA…NQQP). Residues 37–46 (NEKDGNKERL) show a composition bias toward basic and acidic residues. Residues 125-137 (RRSQNIAASSNSS) are compositionally biased toward low complexity. An N-linked (GlcNAc...) asparagine glycan is attached at asparagine 135. Transmembrane regions (helical) follow at residues 190–210 (ILSC…GGLF), 222–242 (AAIL…LIWS), 252–272 (LAYF…ALSP), 282–302 (FLCG…IADM), 312–332 (IAFF…VNGF), 342–362 (LIFW…AFIP), 423–443 (FYVC…PVVF), 453–473 (LIGL…ATTF), 494–514 (LFGA…LGAT), 519–539 (IIWV…VLIY), 553–575 (YASS…FPLF), and 587–607 (WASW…FGFY).

The protein belongs to the major facilitator superfamily. DHA1 family. Polyamines/proton antiporter (TC 2.A.1.2.16) subfamily.

Its subcellular location is the cell membrane. Functionally, cell membrane polyamine/proton antiporter, involved in the detoxification of excess polyamines in the cytoplasm. Involved in the resistance to the imidazole antifungal drugs tioconazole, miconazole, clotrimazole and ketoconazole; to the triazole fluconazole; but not to the antifungals flucytosine or amphotericin B. Plays a role in spermine homeostasis, but spermine accumulation in response to clotrimazole is independent of TPO3. The sequence is that of Multidrug transporter TPO3 from Candida glabrata (strain ATCC 2001 / BCRC 20586 / JCM 3761 / NBRC 0622 / NRRL Y-65 / CBS 138) (Yeast).